The following is a 308-amino-acid chain: Aspartate carbamoyltransferase catalytic subunit (308 aa).

Positions 55 and 56 each coordinate carbamoyl phosphate. Lys83 contacts L-aspartate. Carbamoyl phosphate contacts are provided by Arg105, His133, and Gln136. 2 residues coordinate L-aspartate: Arg166 and Arg220. Residues Gly261 and Pro262 each coordinate carbamoyl phosphate.

Belongs to the aspartate/ornithine carbamoyltransferase superfamily. ATCase family. Heterododecamer (2C3:3R2) of six catalytic PyrB chains organized as two trimers (C3), and six regulatory PyrI chains organized as three dimers (R2).

It catalyses the reaction carbamoyl phosphate + L-aspartate = N-carbamoyl-L-aspartate + phosphate + H(+). It participates in pyrimidine metabolism; UMP biosynthesis via de novo pathway; (S)-dihydroorotate from bicarbonate: step 2/3. Catalyzes the condensation of carbamoyl phosphate and aspartate to form carbamoyl aspartate and inorganic phosphate, the committed step in the de novo pyrimidine nucleotide biosynthesis pathway. The protein is Aspartate carbamoyltransferase catalytic subunit of Chlorobium phaeobacteroides (strain DSM 266 / SMG 266 / 2430).